The following is a 225-amino-acid chain: Helicostatins (225 aa).

The signal sequence occupies residues 1–18; sequence MLYSSLPVCFLVLGAALC. Residues 19 to 48 constitute a propeptide that is removed on maturation; the sequence is APERMQNEAEPHDLQPHEAEPHSDHVAPLA. Leucine amide occurs at positions 58, 79, and 90. Positions 94–127 are excised as a propeptide; that stretch reads SVDEDQSNDEQQLTTSDLDQAALAELFDQYDDAE. The residue at position 137 (Leu-137) is a Leucine amide. Positions 141–149 are excised as a propeptide; that stretch reads FADDETSEE. A leucine amide mark is found at Leu-159, Leu-170, Leu-181, Leu-192, and Leu-206. The tract at residues 205–225 is disordered; the sequence is GLGKRSGDDVSADDSDNYFDV. Positions 210–225 are excised as a propeptide; sequence SGDDVSADDSDNYFDV. A compositionally biased stretch (acidic residues) spans 214 to 225; it reads VSADDSDNYFDV.

It belongs to the allatostatin family. Highly expressed in the CNS and gut of larvae. Also expressed in the cells of the larval brain and ventral nerve cord and in endocrine cells of the midgut.

It localises to the secreted. May act as a neurotransmitter or neuromodulator. This is Helicostatins from Helicoverpa armigera (Cotton bollworm).